A 319-amino-acid polypeptide reads, in one-letter code: ATP-dependent 6-phosphofructokinase (319 aa).

Residue G11 participates in ATP binding. 21–25 is a binding site for ADP; the sequence is RAVVR. Residues 72 to 73 and 102 to 105 contribute to the ATP site; these read RS and GDGS. D103 contributes to the Mg(2+) binding site. Substrate is bound at residue 125–127; sequence TID. The Proton acceptor role is filled by D127. R154 is an ADP binding site. Substrate contacts are provided by residues R162 and 169-171; that span reads MGR. ADP is bound by residues 185-187, R211, and 213-215; these read GAE and KKH. Substrate is bound by residues E222, R243, and 249–252; that span reads HVQR.

It belongs to the phosphofructokinase type A (PFKA) family. ATP-dependent PFK group I subfamily. Prokaryotic clade 'B1' sub-subfamily. Homotetramer. Mg(2+) is required as a cofactor.

It localises to the cytoplasm. It catalyses the reaction beta-D-fructose 6-phosphate + ATP = beta-D-fructose 1,6-bisphosphate + ADP + H(+). It functions in the pathway carbohydrate degradation; glycolysis; D-glyceraldehyde 3-phosphate and glycerone phosphate from D-glucose: step 3/4. Its activity is regulated as follows. Allosterically activated by ADP and other diphosphonucleosides, and allosterically inhibited by phosphoenolpyruvate. Its function is as follows. Catalyzes the phosphorylation of D-fructose 6-phosphate to fructose 1,6-bisphosphate by ATP, the first committing step of glycolysis. This Natranaerobius thermophilus (strain ATCC BAA-1301 / DSM 18059 / JW/NM-WN-LF) protein is ATP-dependent 6-phosphofructokinase.